The chain runs to 430 residues: Flavin-dependent monooxygenase eupH (430 aa).

Residues 11–14 (AGIG), 33–34 (ER), glutamine 43, arginine 107, tyrosine 282, and aspartate 306 each bind FAD.

The protein belongs to the aromatic-ring hydroxylase family. Requires FAD as cofactor.

Its pathway is secondary metabolite biosynthesis; terpenoid biosynthesis. Its function is as follows. Flavin-dependent monooxygenase; part of the gene cluster that mediates the biosynthesis of eupenifeldin, a bistropolone meroterpenoid that acts as an antitumor agent. The first step of eupenifeldin biosynthesis is the biosynthesis of 3-methylorcinaldehyde performed by the non-reducing polyketide synthase eupA. Oxidative dearomatization of 3-methylorcinaldehyde likely catalyzed by the FAD-dependent monooxygenase eupB is followed by oxidative ring expansion by the 2-oxoglutarate-dependent dioxygenase eupC to provide the first tropolone metabolite, tropolone stipitaldehyde. In parallel, generation of sesquiterpene alpha-humulene from farnesylpyrophosphate (FPP) is catalyzed by the terpene cyclase eupE. The cytochrome P450 monooxygenase eupD then hydroxylates humulene to humulenol. The putative Diels-Alderase eupF probably catalyzes the formation of the tropolone-humulene skeleton by linking humulenol and the polyketide moiety. The short-chain dehydrogenase/reductase eupG and the flavin-dependent monooxygenase eupH are also essential for eupenifeldin biosynthesis and are likely the additional decorating enzymes of the tropolone-humulene skeleton to produce final eupenifeldin or derivatives. The protein is Flavin-dependent monooxygenase eupH of Phoma sp.